The chain runs to 232 residues: Histone H1B (232 aa).

Positions 1-18 (MSDPAVEVTPAVPVASPA) are enriched in low complexity. Disordered regions lie at residues 1–44 (MSDP…PPVS) and 99–232 (QTKG…AKKA). Residues 39–113 (THPPVSEMVV…GASGSFKLPA (75 aa)) form the H15 domain. Composition is skewed to basic residues over residues 132-141 (KPKKAAAKPK), 147-173 (KVKK…KTTK), 181-197 (AAKK…KPKA), 205-214 (KRAAAPKAKK), and 222-232 (KAAKKPAAKKA).

Belongs to the histone H1/H5 family.

It is found in the nucleus. It localises to the chromosome. Its function is as follows. Histones H1 are necessary for the condensation of nucleosome chains into higher-order structures. This is Histone H1B from Chironomus tentans (Midge).